A 384-amino-acid polypeptide reads, in one-letter code: NADH-quinone oxidoreductase subunit D 2 (384 aa).

The protein belongs to the complex I 49 kDa subunit family. As to quaternary structure, NDH-1 is composed of 14 different subunits. Subunits NuoB, C, D, E, F, and G constitute the peripheral sector of the complex.

It localises to the cell membrane. It carries out the reaction a quinone + NADH + 5 H(+)(in) = a quinol + NAD(+) + 4 H(+)(out). In terms of biological role, NDH-1 shuttles electrons from NADH, via FMN and iron-sulfur (Fe-S) centers, to quinones in the respiratory chain. The immediate electron acceptor for the enzyme in this species is believed to be a menaquinone. Couples the redox reaction to proton translocation (for every two electrons transferred, four hydrogen ions are translocated across the cytoplasmic membrane), and thus conserves the redox energy in a proton gradient. This is NADH-quinone oxidoreductase subunit D 2 from Symbiobacterium thermophilum (strain DSM 24528 / JCM 14929 / IAM 14863 / T).